Reading from the N-terminus, the 336-residue chain is Anthranilate phosphoribosyltransferase (336 aa).

Residues Gly-78, 81–82 (GD), Thr-86, 88–91 (NVST), 106–114 (KHGNYSVSS), and Ser-118 contribute to the 5-phospho-alpha-D-ribose 1-diphosphate site. Residue Gly-78 coordinates anthranilate. A Mg(2+)-binding site is contributed by Ser-90. Residue Asn-109 participates in anthranilate binding. Arg-164 is an anthranilate binding site. Mg(2+) contacts are provided by Asp-222 and Glu-223.

It belongs to the anthranilate phosphoribosyltransferase family. Homodimer. Requires Mg(2+) as cofactor.

It catalyses the reaction N-(5-phospho-beta-D-ribosyl)anthranilate + diphosphate = 5-phospho-alpha-D-ribose 1-diphosphate + anthranilate. The protein operates within amino-acid biosynthesis; L-tryptophan biosynthesis; L-tryptophan from chorismate: step 2/5. Functionally, catalyzes the transfer of the phosphoribosyl group of 5-phosphorylribose-1-pyrophosphate (PRPP) to anthranilate to yield N-(5'-phosphoribosyl)-anthranilate (PRA). In Halobacterium salinarum (strain ATCC 29341 / DSM 671 / R1), this protein is Anthranilate phosphoribosyltransferase.